Consider the following 426-residue polypeptide: Glutamate-1-semialdehyde 2,1-aminomutase (426 aa).

Lys265 carries the N6-(pyridoxal phosphate)lysine modification.

Belongs to the class-III pyridoxal-phosphate-dependent aminotransferase family. HemL subfamily. Homodimer. The cofactor is pyridoxal 5'-phosphate.

The protein localises to the cytoplasm. The enzyme catalyses (S)-4-amino-5-oxopentanoate = 5-aminolevulinate. The protein operates within porphyrin-containing compound metabolism; protoporphyrin-IX biosynthesis; 5-aminolevulinate from L-glutamyl-tRNA(Glu): step 2/2. The sequence is that of Glutamate-1-semialdehyde 2,1-aminomutase from Paraburkholderia phymatum (strain DSM 17167 / CIP 108236 / LMG 21445 / STM815) (Burkholderia phymatum).